The chain runs to 177 residues: Large ribosomal subunit protein uL6 (177 aa).

It belongs to the universal ribosomal protein uL6 family. Part of the 50S ribosomal subunit.

Functionally, this protein binds to the 23S rRNA, and is important in its secondary structure. It is located near the subunit interface in the base of the L7/L12 stalk, and near the tRNA binding site of the peptidyltransferase center. This chain is Large ribosomal subunit protein uL6, found in Cupriavidus pinatubonensis (strain JMP 134 / LMG 1197) (Cupriavidus necator (strain JMP 134)).